Consider the following 603-residue polypeptide: NADH-ubiquinone oxidoreductase chain 5 (603 aa).

A run of 15 helical transmembrane segments spans residues 4–24, 35–55, 84–104, 121–141, 177–197, 213–233, 241–261, 273–293, 301–320, 325–347, 366–386, 413–433, 457–477, 480–500, and 583–603; these read ISTLTLASLIILTLPITTTLL, ITKTAVTYAFVISLIPTLLFV, FFSLTFMPIALFITWSIMEFS, LLLFLITMLILVSANNLLQLF, IGDMGFIMMMAWFIIHLNSWE, LLGLLLASTGKSAQFGLHPWL, TPVSALLHSSTMVMAGVFTLI, VQTSTLCLGAITTLFTAICAL, IIALSTSSQLGLMMVTIGIN, AFTHMCTHAFFKAMLFLSSGSII, MPITSTAIIIGSLALTGMPFL, LIAVSMTASYSTRIIFFALLG, LILGSIFMGFFISMNTIPHTT, MTMPPHLKFMALAVTLLGFTV, and LMKLYFLSFLLSITLGLLIAL.

Belongs to the complex I subunit 5 family. Core subunit of respiratory chain NADH dehydrogenase (Complex I) which is composed of 45 different subunits.

The protein resides in the mitochondrion inner membrane. It catalyses the reaction a ubiquinone + NADH + 5 H(+)(in) = a ubiquinol + NAD(+) + 4 H(+)(out). Functionally, core subunit of the mitochondrial membrane respiratory chain NADH dehydrogenase (Complex I) which catalyzes electron transfer from NADH through the respiratory chain, using ubiquinone as an electron acceptor. Essential for the catalytic activity and assembly of complex I. This chain is NADH-ubiquinone oxidoreductase chain 5 (MT-ND5), found in Mammuthus primigenius (Siberian woolly mammoth).